Here is a 340-residue protein sequence, read N- to C-terminus: tRNA N6-adenosine threonylcarbamoyltransferase (340 aa).

His-113 and His-117 together coordinate Fe cation. Residues 135–139 (LVSGG), Asp-169, Gly-182, Asp-186, and Asn-274 each bind substrate. Asp-302 serves as a coordination point for Fe cation.

This sequence belongs to the KAE1 / TsaD family. Fe(2+) serves as cofactor.

The protein localises to the cytoplasm. The catalysed reaction is L-threonylcarbamoyladenylate + adenosine(37) in tRNA = N(6)-L-threonylcarbamoyladenosine(37) in tRNA + AMP + H(+). Functionally, required for the formation of a threonylcarbamoyl group on adenosine at position 37 (t(6)A37) in tRNAs that read codons beginning with adenine. Is involved in the transfer of the threonylcarbamoyl moiety of threonylcarbamoyl-AMP (TC-AMP) to the N6 group of A37, together with TsaE and TsaB. TsaD likely plays a direct catalytic role in this reaction. This Mycolicibacterium vanbaalenii (strain DSM 7251 / JCM 13017 / BCRC 16820 / KCTC 9966 / NRRL B-24157 / PYR-1) (Mycobacterium vanbaalenii) protein is tRNA N6-adenosine threonylcarbamoyltransferase.